Reading from the N-terminus, the 588-residue chain is Snake venom 5'-nucleotidase (588 aa).

The N-terminal stretch at 1 to 40 is a signal peptide; that stretch reads MQTPKRRRGAQGCPRSSPSPPLLLLVRAVWFCAALSVAAG. 2 residues coordinate Zn(2+): aspartate 51 and histidine 53. Cysteine 66 and cysteine 71 form a disulfide bridge. 2 residues coordinate Zn(2+): aspartate 99 and asparagine 131. Asparagine 167 is a glycosylation site (N-linked (GlcNAc...) asparagine). 2 residues coordinate Zn(2+): histidine 234 and histidine 257. Residues asparagine 347 and asparagine 361 are each glycosylated (N-linked (GlcNAc...) asparagine). 2 disulfides stabilise this stretch: cysteine 367–cysteine 372 and cysteine 379–cysteine 401. Arginine 368 serves as a coordination point for AMP. Asparagine 404 and arginine 409 together coordinate AMP. N-linked (GlcNAc...) asparagine glycosylation is present at asparagine 418. Phenylalanine 432 is an AMP binding site. A disulfide bridge links cysteine 491 with cysteine 494. Residues phenylalanine 515 and aspartate 521 each coordinate AMP. Asparagine 532 carries an N-linked (GlcNAc...) asparagine glycan. The GPI-anchor amidated serine moiety is linked to residue serine 564. Positions 565–588 are cleaved as a propeptide — removed in mature form; it reads AGTLFQAQLFLTWGLCVSLLYFIL.

Belongs to the 5'-nucleotidase family. Requires Zn(2+) as cofactor. Post-translationally, venom 5'-nucleotidases (or a part thereof) may be released into the venom via exosome-like vesicles. They may be attached via a GPI anchor to the membrane of these vesicles. Soluble forms of 5'-nucleotidase might be released by cleavage of the ectodomain in the exosome-like vesicles or venom gland cells. Expressed by the venom gland.

It is found in the membrane. It catalyses the reaction a ribonucleoside 5'-phosphate + H2O = a ribonucleoside + phosphate. Hydrolyzes nucleotides into nucleosides. Snake venom 5'-nucleotidases are widely distributed among venomous snake taxa, but there is a lack of information about their biological activities. They have been shown to inhibit platelet aggregation. This effect may be due to the liberation of inhibitory AMP or adenosine by its action on ADP released upon initiation of aggregation. Venom 5'-nucleotidases are also known to synergistically act in vivo with other toxins like ADPases, phospholipases, and disintegrins to exert a more pronounced anti-coagulant effect. This chain is Snake venom 5'-nucleotidase, found in Crotalus adamanteus (Eastern diamondback rattlesnake).